The chain runs to 328 residues: MAKIYRDGDASLDWLKGKTIAVIGYGIQGRAQALNLRDSGLDVIIGARRGGNSWEAARRDGFQVYEVGEAVAKADVVMMLIPDMEQPHVWREQVAPNLRKGAVVDFAHGFNIHYKLITPPPYVDVVMVAPKGPGKAVREEFLAGRGVPALVAVYQDYSGAALKYALAIAKGIGATRAGVIETTFAEETETDLIGEQVVLVGGLMELIKKGFEVLVEMGYQPEVAYFEVLNEAKLIMDLIWQRGIYGMLNGVSDTAKYGGLTVGPRVIDDEVKEKMRRAAARVKSGEFAKEWVEEYQRGAPRLRELMEKAKNHPIEAVGAEMRKLLFGP.

The KARI N-terminal Rossmann domain maps to 2 to 182 (AKIYRDGDAS…GATRAGVIET (181 aa)). Residues 25-28 (YGIQ), arginine 48, serine 53, and 83-86 (DMEQ) each bind NADP(+). Residue histidine 108 is part of the active site. Glycine 134 serves as a coordination point for NADP(+). The 146-residue stretch at 183–328 (TFAEETETDL…AEMRKLLFGP (146 aa)) folds into the KARI C-terminal knotted domain. The Mg(2+) site is built by aspartate 191, glutamate 195, glutamate 227, and glutamate 231. Substrate is bound at residue serine 252.

It belongs to the ketol-acid reductoisomerase family. Mg(2+) serves as cofactor.

The enzyme catalyses (2R)-2,3-dihydroxy-3-methylbutanoate + NADP(+) = (2S)-2-acetolactate + NADPH + H(+). It carries out the reaction (2R,3R)-2,3-dihydroxy-3-methylpentanoate + NADP(+) = (S)-2-ethyl-2-hydroxy-3-oxobutanoate + NADPH + H(+). The protein operates within amino-acid biosynthesis; L-isoleucine biosynthesis; L-isoleucine from 2-oxobutanoate: step 2/4. It participates in amino-acid biosynthesis; L-valine biosynthesis; L-valine from pyruvate: step 2/4. In terms of biological role, involved in the biosynthesis of branched-chain amino acids (BCAA). Catalyzes an alkyl-migration followed by a ketol-acid reduction of (S)-2-acetolactate (S2AL) to yield (R)-2,3-dihydroxy-isovalerate. In the isomerase reaction, S2AL is rearranged via a Mg-dependent methyl migration to produce 3-hydroxy-3-methyl-2-ketobutyrate (HMKB). In the reductase reaction, this 2-ketoacid undergoes a metal-dependent reduction by NADPH to yield (R)-2,3-dihydroxy-isovalerate. In Pyrobaculum calidifontis (strain DSM 21063 / JCM 11548 / VA1), this protein is Ketol-acid reductoisomerase (NADP(+)).